Here is a 348-residue protein sequence, read N- to C-terminus: Macrophage-capping protein (348 aa).

M1 is modified (N-acetylmethionine). Residues 27–75 (EKLKPVPVAQENQGVFFSGDSYLVLHNGPEEVSHLHLWIGQQSSRDEQG) form a Gelsolin-like 1 repeat. The short motif at 137–146 (KKLYQVKGKK) is the Nuclear localization signal element. 2 Gelsolin-like repeats span residues 148–188 (IRAT…LERN) and 261–307 (MNLT…KERQ). Residue S337 is modified to Phosphoserine.

This sequence belongs to the villin/gelsolin family. In terms of assembly, interacts with NUP62. Interacts with NUTF2 and RAN; involved in CAPG nuclear import. The N-terminus is blocked. Macrophages and macrophage-like cells.

The protein resides in the nucleus. It localises to the cytoplasm. Its subcellular location is the melanosome. The protein localises to the cell projection. It is found in the lamellipodium. The protein resides in the ruffle. Its function is as follows. Calcium-sensitive protein which reversibly blocks the barbed ends of actin filaments but does not sever preformed actin filaments. May play an important role in macrophage function. May play a role in regulating cytoplasmic and/or nuclear structures through potential interactions with actin. May bind DNA. The chain is Macrophage-capping protein (CAPG) from Homo sapiens (Human).